The chain runs to 367 residues: MSLADQVLAVNDDLPIRTDKPVHSGKVRSVYWLTEEDSARLIKEKGYNVAPDAPLAIMVISDRISAFDCIWHGEHGLNGVPGKGAALNAISNHWFGLFKENGLADSHILDIPHPFVWIVQKAKPVKIEAICRKYITGSMWRAYEKGEREFCGIQLPEGLEKDKALPDLLMTPSTKGILKGIPGVPEADDVNITRQNIADNFAAFNFSSADDIALYEKLLKDGFGVISEALANVGQIFVDTKFEFGYVTDAAGNEKLIYMDEVGTPDSSRIWDAQEYQAGKIVENSKEGFRQFLLNYFPDPDILLNKDRMPEREALARDNELPEEALMAVSRTYINIAEKITGSAIVLSDNPKQEIIDILGREYGLID.

Belongs to the SAICAR synthetase family.

It carries out the reaction 5-amino-1-(5-phospho-D-ribosyl)imidazole-4-carboxylate + L-aspartate + ATP = (2S)-2-[5-amino-1-(5-phospho-beta-D-ribosyl)imidazole-4-carboxamido]succinate + ADP + phosphate + 2 H(+). It participates in purine metabolism; IMP biosynthesis via de novo pathway; 5-amino-1-(5-phospho-D-ribosyl)imidazole-4-carboxamide from 5-amino-1-(5-phospho-D-ribosyl)imidazole-4-carboxylate: step 1/2. This Vibrio vulnificus (strain CMCP6) protein is Phosphoribosylaminoimidazole-succinocarboxamide synthase.